We begin with the raw amino-acid sequence, 590 residues long: MPPVPIYVKGGVWTNVEDQILKAAVQKYGTHQWSKVASLLQKKTARQSELRWNEYLNPKLNFTEFSKEEDAQLLDLARELPNQWRTIADMMARPAQVCVERYNRLLESEDSGGAALSTGVTDLKAGDINPNAETQMARPDNGDLEDEEKEMLAEARARLLNTQGKKATRKIRERMLEESKRIAELQKRRELKQAGINVAIKKPKKKYGTDIDYNEDIVYEQAPMPGIYDTSTEDRQIKKKFEQFERKVNRKGLDGNKDKPSKKNKDKKRKHDENEHVEKAALGESTTLTDEYKKPKLILSAPGTKQGKVTYKKKLESKRQKLIEAQATGTVLTPKELLPHDSGQEDNERSNIKSGKQLKSRIRKFLVQMFASLPSPKNDFEIVLSEDEKEEDAEIAEYEKEFENERAMNEEDNFIEPPSQNDAPRVSLVAVPLAYSTLPIPEFKNNPQSAIDNKYNLLVANAINKEPHMVPEDTVDFLKEVESRMQHITQGRTSMKIQFKTAMPPTEVLLESIQSKVESIEQLQRKLQHVQPLEQQNNEMCSTLCHHSLPALIEGQRKYYADYYAYRQEIRSLEGRRKRLQAMLNSSSSI.

HTH myb-type domains lie at 1-60 and 63-110; these read MPPV…NPKL and TEFS…ESED. 2 DNA-binding regions (H-T-H motif) span residues 33 to 56 and 84 to 106; these read WSKV…NEYL and WRTI…NRLL. Basic and acidic residues-rich tracts occupy residues 244-263, 271-281, and 337-351; these read FERK…PSKK, HDENEHVEKAA, and LLPH…ERSN. Disordered regions lie at residues 244–286 and 336–355; these read FERK…GEST and ELLP…IKSG. Positions 460-490 are interaction with PRP19 and self-interaction; sequence ANAINKEPHMVPEDTVDFLKEVESRMQHITQ.

The protein belongs to the CEF1 family. In terms of assembly, belongs to the NTC complex (or PRP19-associated complex), composed of at least CEF1, CLF1, ISY1, NTC20, SNT309, SYF1, SYF2, and PRP19. The NTC complex associates with the spliceosome after the release of the U1 and U4 snRNAs and forms the CWC spliceosome subcomplex (or CEF1-associated complex) reminiscent of a late-stage spliceosome composed also of the U2, U5 and U6 snRNAs and at least BUD13, BUD31, BRR2, CDC40, CUS1, CWC2, CWC15, CWC21, CWC22, CWC23, CWC24, CWC25, CWC27, ECM2, HSH155, IST3, LEA1, MSL1, PRP8, PRP9, PRP11, PRP21, PRP22, PRP45, PRP46, SLU7, SMB1, SMD1, SMD2, SMD3, SMX2, SMX3, SNU114, SPP2, RSE1 and YJU2. Interacts with CLF1, ISY1, NTC20, PRP19, PRP46, SYF1 and SYF2.

Its subcellular location is the cytoplasm. The protein resides in the nucleus. In terms of biological role, involved in pre-mRNA splicing and cell cycle control. Required for the binding of the NTC complex (or PRP19-associated complex) components to the spliceosome to mediate conformational rearrangement or to stabilize the structure of the spliceosome after U4 snRNA dissociation, which leads to spliceosome maturation. Its absence leads to an arrest of the cell cycle, possibly due to the inefficient splicing of TUB1. The sequence is that of Pre-mRNA-splicing factor CEF1 (CEF1) from Saccharomyces cerevisiae (strain ATCC 204508 / S288c) (Baker's yeast).